Here is a 372-residue protein sequence, read N- to C-terminus: Putative glutamate--cysteine ligase 2 (372 aa).

The protein belongs to the glutamate--cysteine ligase type 2 family. YbdK subfamily. As to quaternary structure, homodimer.

It catalyses the reaction L-cysteine + L-glutamate + ATP = gamma-L-glutamyl-L-cysteine + ADP + phosphate + H(+). In terms of biological role, ATP-dependent carboxylate-amine ligase which exhibits weak glutamate--cysteine ligase activity. In Escherichia coli (strain K12 / MC4100 / BW2952), this protein is Putative glutamate--cysteine ligase 2 (ybdK).